A 218-amino-acid polypeptide reads, in one-letter code: Probable transaldolase (218 aa).

The active-site Schiff-base intermediate with substrate is the Lys-87.

Belongs to the transaldolase family. Type 3B subfamily.

The protein resides in the cytoplasm. The enzyme catalyses D-sedoheptulose 7-phosphate + D-glyceraldehyde 3-phosphate = D-erythrose 4-phosphate + beta-D-fructose 6-phosphate. It functions in the pathway carbohydrate degradation; pentose phosphate pathway; D-glyceraldehyde 3-phosphate and beta-D-fructose 6-phosphate from D-ribose 5-phosphate and D-xylulose 5-phosphate (non-oxidative stage): step 2/3. In terms of biological role, transaldolase is important for the balance of metabolites in the pentose-phosphate pathway. This Flavobacterium psychrophilum (strain ATCC 49511 / DSM 21280 / CIP 103535 / JIP02/86) protein is Probable transaldolase.